Here is a 715-residue protein sequence, read N- to C-terminus: Methylmalonyl-CoA mutase large subunit (715 aa).

(R)-methylmalonyl-CoA-binding residues include Tyr-70, Met-73, Arg-77, Thr-80, Arg-82, Tyr-84, and Ser-109. Residues Phe-112 and Ala-134 each contribute to the cob(II)alamin site. (R)-methylmalonyl-CoA-binding residues include Thr-190 and Gln-192. Cob(II)alamin-binding residues include Val-201 and Arg-202. (R)-methylmalonyl-CoA is bound by residues Arg-202, His-239, Arg-278, and Ser-280. Cob(II)alamin-binding residues include Gly-328, Glu-365, Ala-368, Gly-599, His-600, Asp-601, Arg-602, Ser-645, Leu-647, Gly-676, and Thr-699. A B12-binding domain is found at 587 to 715; sequence QPRIMIAKMG…AKVLEILLEE (129 aa).

It belongs to the methylmalonyl-CoA mutase family. In terms of assembly, heterodimer of an alpha and a beta chain. It depends on adenosylcob(III)alamin as a cofactor.

The catalysed reaction is (R)-methylmalonyl-CoA = succinyl-CoA. Its function is as follows. Catalyzes the isomerization of succinyl-CoA to methylmalonyl-CoA during synthesis of propionate from tricarboxylic acid-cycle intermediates. The polypeptide is Methylmalonyl-CoA mutase large subunit (mutB) (Porphyromonas gingivalis (strain ATCC BAA-308 / W83)).